The following is a 172-amino-acid chain: CD164 sialomucin-like 2 protein (172 aa).

Positions 1-29 (MAAPGPRALRAALCGGCCCLLLCAQLVLA) are cleaved as a signal peptide. At 30-137 (GKGARGFGRG…PEDHSPGFDG (108 aa)) the chain is on the extracellular side. 2 N-linked (GlcNAc...) asparagine glycosylation sites follow: Asn69 and Asn101. The disordered stretch occupies residues 108–132 (ASHHHSTEEPKPSTTGSPPIPEDHS). The chain crosses the membrane as a helical span at residues 138 to 158 (ASFIGGIVLVLSLQATAFFVL). Over 159–172 (RFLKAKDSTYQTLI) the chain is Cytoplasmic.

It belongs to the CD164 family.

The protein localises to the membrane. The sequence is that of CD164 sialomucin-like 2 protein (Cd164l2) from Mus musculus (Mouse).